Reading from the N-terminus, the 218-residue chain is Probable nicotinate-nucleotide adenylyltransferase (218 aa).

This sequence belongs to the NadD family.

The catalysed reaction is nicotinate beta-D-ribonucleotide + ATP + H(+) = deamido-NAD(+) + diphosphate. The protein operates within cofactor biosynthesis; NAD(+) biosynthesis; deamido-NAD(+) from nicotinate D-ribonucleotide: step 1/1. In terms of biological role, catalyzes the reversible adenylation of nicotinate mononucleotide (NaMN) to nicotinic acid adenine dinucleotide (NaAD). This Acidithiobacillus ferrooxidans (strain ATCC 23270 / DSM 14882 / CIP 104768 / NCIMB 8455) (Ferrobacillus ferrooxidans (strain ATCC 23270)) protein is Probable nicotinate-nucleotide adenylyltransferase.